The following is a 307-amino-acid chain: Ethylmalonyl-CoA decarboxylase (307 aa).

N-acetylalanine is present on A2. An N6-acetyllysine; alternate modification is found at K217. K217 is modified (N6-succinyllysine; alternate). N6-succinyllysine is present on K301.

It belongs to the enoyl-CoA hydratase/isomerase family.

The protein resides in the cytoplasm. It localises to the cytosol. The enzyme catalyses (2S)-ethylmalonyl-CoA + H(+) = butanoyl-CoA + CO2. It carries out the reaction (S)-methylmalonyl-CoA + H(+) = propanoyl-CoA + CO2. The catalysed reaction is (2R)-ethylmalonyl-CoA + H(+) = butanoyl-CoA + CO2. Its function is as follows. Decarboxylates ethylmalonyl-CoA, a potentially toxic metabolite, to form butyryl-CoA, suggesting it might be involved in metabolite proofreading. Acts preferentially on (S)-ethylmalonyl-CoA but also has some activity on the (R)-isomer. Also has methylmalonyl-CoA decarboxylase activity at lower level. The chain is Ethylmalonyl-CoA decarboxylase (ECHDC1) from Homo sapiens (Human).